A 307-amino-acid chain; its full sequence is Glycine--tRNA ligase alpha subunit (307 aa).

This sequence belongs to the class-II aminoacyl-tRNA synthetase family. In terms of assembly, tetramer of two alpha and two beta subunits.

The protein resides in the cytoplasm. The enzyme catalyses tRNA(Gly) + glycine + ATP = glycyl-tRNA(Gly) + AMP + diphosphate. The sequence is that of Glycine--tRNA ligase alpha subunit from Aeromonas hydrophila subsp. hydrophila (strain ATCC 7966 / DSM 30187 / BCRC 13018 / CCUG 14551 / JCM 1027 / KCTC 2358 / NCIMB 9240 / NCTC 8049).